The sequence spans 278 residues: Formamidopyrimidine-DNA glycosylase (278 aa).

Pro2 serves as the catalytic Schiff-base intermediate with DNA. Glu3 (proton donor) is an active-site residue. Catalysis depends on Lys58, which acts as the Proton donor; for beta-elimination activity. Residues His91, Arg109, and Arg158 each contribute to the DNA site. The segment at 243-277 (KVYDRKGLPCKVCKTPISQMVQGQRTTYFCSQCQK) adopts an FPG-type zinc-finger fold. Catalysis depends on Arg267, which acts as the Proton donor; for delta-elimination activity.

It belongs to the FPG family. As to quaternary structure, monomer. The cofactor is Zn(2+).

It catalyses the reaction Hydrolysis of DNA containing ring-opened 7-methylguanine residues, releasing 2,6-diamino-4-hydroxy-5-(N-methyl)formamidopyrimidine.. It carries out the reaction 2'-deoxyribonucleotide-(2'-deoxyribose 5'-phosphate)-2'-deoxyribonucleotide-DNA = a 3'-end 2'-deoxyribonucleotide-(2,3-dehydro-2,3-deoxyribose 5'-phosphate)-DNA + a 5'-end 5'-phospho-2'-deoxyribonucleoside-DNA + H(+). In terms of biological role, involved in base excision repair of DNA damaged by oxidation or by mutagenic agents. Acts as a DNA glycosylase that recognizes and removes damaged bases. Has a preference for oxidized purines, such as 7,8-dihydro-8-oxoguanine (8-oxoG). Has AP (apurinic/apyrimidinic) lyase activity and introduces nicks in the DNA strand. Cleaves the DNA backbone by beta-delta elimination to generate a single-strand break at the site of the removed base with both 3'- and 5'-phosphates. This is Formamidopyrimidine-DNA glycosylase from Polynucleobacter necessarius subsp. necessarius (strain STIR1).